Here is a 542-residue protein sequence, read N- to C-terminus: Chaperonin GroEL (542 aa).

ATP-binding positions include Thr29–Pro32, Asp86–Thr90, Gly413, Asn476–Ala478, and Asp492.

Belongs to the chaperonin (HSP60) family. Forms a cylinder of 14 subunits composed of two heptameric rings stacked back-to-back. Interacts with the co-chaperonin GroES.

The protein localises to the cytoplasm. The enzyme catalyses ATP + H2O + a folded polypeptide = ADP + phosphate + an unfolded polypeptide.. In terms of biological role, together with its co-chaperonin GroES, plays an essential role in assisting protein folding. The GroEL-GroES system forms a nano-cage that allows encapsulation of the non-native substrate proteins and provides a physical environment optimized to promote and accelerate protein folding. This Bacillus cytotoxicus (strain DSM 22905 / CIP 110041 / 391-98 / NVH 391-98) protein is Chaperonin GroEL.